The sequence spans 391 residues: Somatostatin receptor type 1 (391 aa).

The span at 1 to 11 (MFPNGTASSPS) shows a compositional bias: low complexity. The segment at 1 to 49 (MFPNGTASSPSSPSPSPGSCGEGGGSRGPGAGAADGMEEPGRNASQNGT) is disordered. Topologically, residues 1-55 (MFPNGTASSPSSPSPSPGSCGEGGGSRGPGAGAADGMEEPGRNASQNGTLSEGQG) are extracellular. The N-linked (GlcNAc...) asparagine glycan is linked to Asn-4. Residues 20–33 (CGEGGGSRGPGAGA) show a composition bias toward gly residues. N-linked (GlcNAc...) asparagine glycans are attached at residues Asn-43 and Asn-47. Residues 56–83 (SAILISFIYSVVCLVGLCGNSMVIYVIL) form a helical membrane-spanning segment. Topologically, residues 84-93 (RYAKMKTATN) are cytoplasmic. Residues 94-119 (IYILNLAIADELLMLSVPFLVTSTLL) form a helical membrane-spanning segment. At 120–130 (RHWPFGALLCR) the chain is on the extracellular side. A disulfide bond links Cys-129 and Cys-207. A helical transmembrane segment spans residues 131–152 (LVLSVDAVNMFTSIYCLTVLSV). The Cytoplasmic portion of the chain corresponds to 153–174 (DRYVAVVHPIKAARYRRPTVAK). A helical membrane pass occupies residues 175-195 (VVNLGVWVLSLLVILPIVVFS). At 196–218 (RTAANSDGTVACNMLMPEPAQRW) the chain is on the extracellular side. Residues 219-243 (LVGFVLYTFLMGFLLPVGAICLCYV) traverse the membrane as a helical segment. At 244-269 (LIIAKMRMVALKAGWQQRKRSERKIT) the chain is on the cytoplasmic side. A helical transmembrane segment spans residues 270 to 295 (LMVMMVVMVFVICWMPFYVVQLVNVF). Over 296-302 (AEQDDAT) the chain is Extracellular. A helical membrane pass occupies residues 303–326 (VSQLSVILGYANSCANPILYGFLS). The Cytoplasmic segment spans residues 327–391 (DNFKRSFQRI…GTCTSRITTL (65 aa)). Cys-338 carries the S-palmitoyl cysteine lipid modification.

This sequence belongs to the G-protein coupled receptor 1 family. In terms of assembly, interacts with SKB1.

It is found in the cell membrane. Receptor for somatostatin with higher affinity for somatostatin-14 than -28. This receptor is coupled via pertussis toxin sensitive G proteins to inhibition of adenylyl cyclase. In addition it stimulates phosphotyrosine phosphatase and Na(+)/H(+) exchanger via pertussis toxin insensitive G proteins. This Canis lupus familiaris (Dog) protein is Somatostatin receptor type 1 (SSTR1).